The following is a 229-amino-acid chain: tRNA (guanine-N(1)-)-methyltransferase (229 aa).

Residues G109 and 129–134 (IGDFIL) each bind S-adenosyl-L-methionine.

This sequence belongs to the RNA methyltransferase TrmD family. Homodimer.

The protein resides in the cytoplasm. It catalyses the reaction guanosine(37) in tRNA + S-adenosyl-L-methionine = N(1)-methylguanosine(37) in tRNA + S-adenosyl-L-homocysteine + H(+). Its function is as follows. Specifically methylates guanosine-37 in various tRNAs. The sequence is that of tRNA (guanine-N(1)-)-methyltransferase from Helicobacter pylori (strain Shi470).